A 357-amino-acid chain; its full sequence is Biotin synthase (357 aa).

The tract at residues 1 to 27 (MTTAETKPATETGENAGTTGTAGTAAT) is disordered. Over residues 9–27 (ATETGENAGTTGTAGTAAT) the composition is skewed to low complexity. The Radical SAM core domain occupies 78–303 (DAVEMEGIIS…RQLLRFAGGR (226 aa)). [4Fe-4S] cluster-binding residues include cysteine 93, cysteine 97, and cysteine 100. Positions 136, 228, and 298 each coordinate [2Fe-2S] cluster.

It belongs to the radical SAM superfamily. Biotin synthase family. Homodimer. It depends on [4Fe-4S] cluster as a cofactor. [2Fe-2S] cluster serves as cofactor.

The catalysed reaction is (4R,5S)-dethiobiotin + (sulfur carrier)-SH + 2 reduced [2Fe-2S]-[ferredoxin] + 2 S-adenosyl-L-methionine = (sulfur carrier)-H + biotin + 2 5'-deoxyadenosine + 2 L-methionine + 2 oxidized [2Fe-2S]-[ferredoxin]. It participates in cofactor biosynthesis; biotin biosynthesis; biotin from 7,8-diaminononanoate: step 2/2. Catalyzes the conversion of dethiobiotin (DTB) to biotin by the insertion of a sulfur atom into dethiobiotin via a radical-based mechanism. This chain is Biotin synthase, found in Corynebacterium jeikeium (strain K411).